Reading from the N-terminus, the 1092-residue chain is Probable cellulose synthase A catalytic subunit 6 [UDP-forming] (1092 aa).

The Cytoplasmic portion of the chain corresponds to 1–280 (MEASAGLVAG…SSSRINPYRM (280 aa)). Zn(2+)-binding residues include cysteine 42, cysteine 45, cysteine 61, cysteine 64, cysteine 69, cysteine 72, cysteine 84, and cysteine 87. Residues 42–88 (CQICGDDVGEGPDGEPFVACNECAFPVCRNCYDYERREGSQACPQCK) form an RING-type; degenerate zinc finger. Positions 100–123 (VAGDEEEDGVDDLEGEFGLDGRED) are disordered. The span at 103 to 116 (DEEEDGVDDLEGEF) shows a compositional bias: acidic residues. Residues 281–301 (IIIIRLVVLGFFFHYRVMHPV) traverse the membrane as a helical segment. Residues 302–303 (ND) are Extracellular-facing. Residues 304–324 (AFALWLISVICEIWFAMSWIL) traverse the membrane as a helical segment. Residues 325–868 (DQFPKWLPIE…FLERFSYINS (544 aa)) lie on the Cytoplasmic side of the membrane. Residues serine 363, lysine 369, glutamate 370, and aspartate 399 each coordinate UDP-alpha-D-glucose. Aspartate 399 is an active-site residue. Positions 453-480 (VRERRAMKRDYEEFKVRINALVAKAQKV) form a coiled coil. Lysine 540 lines the UDP-alpha-D-glucose pocket. Residues lysine 541 and aspartate 565 each coordinate Mn(2+). Aspartate 792 is an active-site residue. Residues 869-889 (IVYPWTSIPLLAYCTLPAICL) form a helical membrane-spanning segment. Topologically, residues 890 to 901 (LTGKFITPELTN) are extracellular. A helical transmembrane segment spans residues 902–922 (VASLWFMSLFICIFVTGILEM). Residues 923-937 (RWSGVAIDDWWRNEQ) are Cytoplasmic-facing. The helical transmembrane segment at 938–958 (FWVIGGVSSHLFAVFQGLLKV) threads the bilayer. Residues 959-987 (LAGVDTSFTVTSKAGDDEEFSELYTFKWT) are Extracellular-facing. The helical transmembrane segment at 988-1008 (TLLIPPTTLLLLNFIGVVAGV) threads the bilayer. The Cytoplasmic portion of the chain corresponds to 1009–1019 (SNAINNGYESW). The helical transmembrane segment at 1020-1040 (GPLFGKLFFAFWVIVHLYPFL) threads the bilayer. Residues 1041 to 1049 (KGLVGRQNR) are Extracellular-facing. A helical transmembrane segment spans residues 1050–1070 (TPTIVIVWSILLASIFSLLWV). Over 1071–1092 (RIDPFLAKNNGPLLEECGLDCN) the chain is Cytoplasmic.

The protein belongs to the glycosyltransferase 2 family. Plant cellulose synthase subfamily. Mn(2+) is required as a cofactor. The cofactor is Zn(2+).

Its subcellular location is the cell membrane. It carries out the reaction [(1-&gt;4)-beta-D-glucosyl](n) + UDP-alpha-D-glucose = [(1-&gt;4)-beta-D-glucosyl](n+1) + UDP + H(+). The protein operates within glycan metabolism; plant cellulose biosynthesis. Probable catalytic subunit of cellulose synthase terminal complexes ('rosettes'), required for beta-1,4-glucan microfibril crystallization, a major mechanism of the cell wall formation. This Oryza sativa subsp. japonica (Rice) protein is Probable cellulose synthase A catalytic subunit 6 [UDP-forming] (CESA6).